Here is a 246-residue protein sequence, read N- to C-terminus: Trypsin V-A (246 aa).

A signal peptide spans 1 to 15 (MKICIFFTLLGTVAA). Positions 16–24 (FPTEDNDDR) are cleaved as a propeptide — activation peptide. In terms of domain architecture, Peptidase S1 spans 25-244 (IVGGYTCQEH…YLNWIHQTIA (220 aa)). Disulfide bonds link C31–C160, C49–C65, C133–C233, C140–C206, C171–C185, and C196–C220. Residue H64 is the Charge relay system of the active site. Residues E76, N78, and E86 each contribute to the Ca(2+) site. The Charge relay system role is filled by D108. The active-site Charge relay system is the S200.

The protein belongs to the peptidase S1 family. Requires Ca(2+) as cofactor.

It is found in the secreted. The protein localises to the extracellular space. It carries out the reaction Preferential cleavage: Arg-|-Xaa, Lys-|-Xaa.. This is Trypsin V-A from Rattus norvegicus (Rat).